A 424-amino-acid chain; its full sequence is Serine hydroxymethyltransferase 1 (424 aa).

Residues Leu-125 and 129–131 (GHL) each bind (6S)-5,6,7,8-tetrahydrofolate. Lys-234 is subject to N6-(pyridoxal phosphate)lysine.

It belongs to the SHMT family. In terms of assembly, homodimer. Requires pyridoxal 5'-phosphate as cofactor.

It is found in the cytoplasm. The catalysed reaction is (6R)-5,10-methylene-5,6,7,8-tetrahydrofolate + glycine + H2O = (6S)-5,6,7,8-tetrahydrofolate + L-serine. It participates in one-carbon metabolism; tetrahydrofolate interconversion. The protein operates within amino-acid biosynthesis; glycine biosynthesis; glycine from L-serine: step 1/1. Functionally, catalyzes the reversible interconversion of serine and glycine with tetrahydrofolate (THF) serving as the one-carbon carrier. This reaction serves as the major source of one-carbon groups required for the biosynthesis of purines, thymidylate, methionine, and other important biomolecules. Also exhibits THF-independent aldolase activity toward beta-hydroxyamino acids, producing glycine and aldehydes, via a retro-aldol mechanism. This chain is Serine hydroxymethyltransferase 1, found in Burkholderia lata (strain ATCC 17760 / DSM 23089 / LMG 22485 / NCIMB 9086 / R18194 / 383).